The chain runs to 316 residues: tRNA methyltransferase 10 homolog B (316 aa).

Disordered regions lie at residues 1–30 (MDCE…RDDG) and 42–98 (VEYD…DLGN). Positions 63–82 (VQRKQRHWERIVSSKKSKRK) are enriched in basic residues. The stretch at 75–96 (SSKKSKRKQERERRKIKRAEDL) forms a coiled coil. Residues 83–95 (QERERRKIKRAED) are compositionally biased toward basic and acidic residues. An SAM-dependent MTase TRM10-type domain is found at 113–310 (TKEKLLEAKH…KGVSPGKGYI (198 aa)).

It belongs to the class IV-like SAM-binding methyltransferase superfamily. TRM10 family.

It carries out the reaction guanosine(9) in tRNA + S-adenosyl-L-methionine = N(1)-methylguanosine(9) in tRNA + S-adenosyl-L-homocysteine + H(+). In terms of biological role, S-adenosyl-L-methionine-dependent guanine N(1)-methyltransferase that catalyzes the formation of N(1)-methylguanine at position 9 (m1G9) in tRNAs. Probably not able to catalyze formation of N(1)-methyladenine at position 9 (m1A9) in tRNAs. The protein is tRNA methyltransferase 10 homolog B (Trmt10b) of Rattus norvegicus (Rat).